The following is a 343-amino-acid chain: Phosphoribosylformylglycinamidine cyclo-ligase (343 aa).

It belongs to the AIR synthase family.

It is found in the cytoplasm. It carries out the reaction 2-formamido-N(1)-(5-O-phospho-beta-D-ribosyl)acetamidine + ATP = 5-amino-1-(5-phospho-beta-D-ribosyl)imidazole + ADP + phosphate + H(+). It functions in the pathway purine metabolism; IMP biosynthesis via de novo pathway; 5-amino-1-(5-phospho-D-ribosyl)imidazole from N(2)-formyl-N(1)-(5-phospho-D-ribosyl)glycinamide: step 2/2. The chain is Phosphoribosylformylglycinamidine cyclo-ligase from Thermodesulfovibrio yellowstonii (strain ATCC 51303 / DSM 11347 / YP87).